The following is an 89-amino-acid chain: Small ribosomal subunit protein uS19 (89 aa).

The protein belongs to the universal ribosomal protein uS19 family.

Functionally, protein S19 forms a complex with S13 that binds strongly to the 16S ribosomal RNA. This is Small ribosomal subunit protein uS19 from Stenotrophomonas maltophilia (strain R551-3).